Here is a 432-residue protein sequence, read N- to C-terminus: D-amino acid dehydrogenase (432 aa).

3–17 (VVVLGSGVVGVTSAW) contacts FAD.

This sequence belongs to the DadA oxidoreductase family. FAD is required as a cofactor.

It carries out the reaction a D-alpha-amino acid + A + H2O = a 2-oxocarboxylate + AH2 + NH4(+). It participates in amino-acid degradation; D-alanine degradation; NH(3) and pyruvate from D-alanine: step 1/1. Oxidative deamination of D-amino acids. In Enterobacter sp. (strain 638), this protein is D-amino acid dehydrogenase.